A 199-amino-acid polypeptide reads, in one-letter code: Recombination protein RecR (199 aa).

Residues 58–73 (CQRCNNFSEEAVCQRC) form a C4-type zinc finger. Residues 81–176 (ATLCVVEMPA…KVSRISRGVP (96 aa)) enclose the Toprim domain.

Belongs to the RecR family.

Its function is as follows. May play a role in DNA repair. It seems to be involved in an RecBC-independent recombinational process of DNA repair. It may act with RecF and RecO. The chain is Recombination protein RecR from Azoarcus sp. (strain BH72).